The following is a 369-amino-acid chain: Histidinol-phosphate aminotransferase (369 aa).

The tract at residues 1-39 (MSFGIDDLPVRDELRGKSPYGAPQLDVPVRLNTNENPYP) is disordered. Lysine 230 is modified (N6-(pyridoxal phosphate)lysine).

The protein belongs to the class-II pyridoxal-phosphate-dependent aminotransferase family. Histidinol-phosphate aminotransferase subfamily. In terms of assembly, homodimer. Pyridoxal 5'-phosphate serves as cofactor.

The catalysed reaction is L-histidinol phosphate + 2-oxoglutarate = 3-(imidazol-4-yl)-2-oxopropyl phosphate + L-glutamate. It functions in the pathway amino-acid biosynthesis; L-histidine biosynthesis; L-histidine from 5-phospho-alpha-D-ribose 1-diphosphate: step 7/9. This Streptomyces avermitilis (strain ATCC 31267 / DSM 46492 / JCM 5070 / NBRC 14893 / NCIMB 12804 / NRRL 8165 / MA-4680) protein is Histidinol-phosphate aminotransferase (hisC).